Here is a 132-residue protein sequence, read N- to C-terminus: UPF0212 protein PYRAB08340 (132 aa).

The protein belongs to the UPF0212 family.

This is UPF0212 protein PYRAB08340 from Pyrococcus abyssi (strain GE5 / Orsay).